A 342-amino-acid chain; its full sequence is Galactose mutarotase (342 aa).

Ala2 carries the N-acetylalanine modification. Ser14 bears the Phosphoserine mark. Beta-D-galactose is bound by residues 81–82 and His107; that span reads NR. Position 124 is a phosphoserine (Ser124). His176 (proton donor) is an active-site residue. Beta-D-galactose is bound by residues 176 to 178, Asp243, Gln279, and Glu307; that span reads HSY. Glu307 functions as the Proton acceptor in the catalytic mechanism.

It belongs to the aldose epimerase family. In terms of assembly, monomer.

It is found in the cytoplasm. The catalysed reaction is alpha-D-galactose = beta-D-galactose. The enzyme catalyses alpha-D-glucose = beta-D-glucose. It participates in carbohydrate metabolism; hexose metabolism. The protein operates within carbohydrate metabolism; galactose metabolism. Its function is as follows. Mutarotase that catalyzes the interconversion of beta-D-galactose and alpha-D-galactose during galactose metabolism. Beta-D-galactose is metabolized in the liver into glucose 1-phosphate, the primary metabolic fuel, by the action of four enzymes that constitute the Leloir pathway: GALM, GALK1 (galactokinase), GALT (galactose-1-phosphate uridylyltransferase) and GALE (UDP-galactose-4'-epimerase). Involved in the maintenance of the equilibrium between the beta- and alpha-anomers of galactose, therefore ensuring a sufficient supply of the alpha-anomer for GALK1. Also active on D-glucose although shows a preference for galactose over glucose. In Homo sapiens (Human), this protein is Galactose mutarotase.